A 340-amino-acid polypeptide reads, in one-letter code: N-acetyl-gamma-glutamyl-phosphate reductase (340 aa).

Cys147 is a catalytic residue.

This sequence belongs to the NAGSA dehydrogenase family. Type 1 subfamily.

Its subcellular location is the cytoplasm. The catalysed reaction is N-acetyl-L-glutamate 5-semialdehyde + phosphate + NADP(+) = N-acetyl-L-glutamyl 5-phosphate + NADPH + H(+). The protein operates within amino-acid biosynthesis; L-arginine biosynthesis; N(2)-acetyl-L-ornithine from L-glutamate: step 3/4. Its function is as follows. Catalyzes the NADPH-dependent reduction of N-acetyl-5-glutamyl phosphate to yield N-acetyl-L-glutamate 5-semialdehyde. The protein is N-acetyl-gamma-glutamyl-phosphate reductase of Lactococcus lactis subsp. lactis (strain IL1403) (Streptococcus lactis).